The following is a 477-amino-acid chain: V-type ATP synthase beta chain (477 aa).

The protein belongs to the ATPase alpha/beta chains family.

In terms of biological role, produces ATP from ADP in the presence of a proton gradient across the membrane. The V-type beta chain is a regulatory subunit. This chain is V-type ATP synthase beta chain, found in Anaeromyxobacter sp. (strain K).